Reading from the N-terminus, the 137-residue chain is Probable DNA-directed RNA polymerases I, II, and III subunit RPABC2 (137 aa).

Acidic residues-rich tracts occupy residues 1–27 and 34–43; these read MADE…VIEE and NEDEDDDNVD. Residues 1–43 form a disordered region; the sequence is MADEDDYQDMDNDDFVDDNEMEDVIEEDPQRPDNEDEDDDNVD.

The protein belongs to the archaeal Rpo6/eukaryotic RPB6 RNA polymerase subunit family. As to quaternary structure, component of the RNA polymerase I (Pol I), RNA polymerase II (Pol II) and RNA polymerase III (Pol III) complexes consisting of at least 13, 12 and 17 subunits, respectively.

The protein resides in the nucleus. Functionally, DNA-dependent RNA polymerases catalyze the transcription of DNA into RNA using the four ribonucleoside triphosphates as substrates. Common component of RNA polymerases I, II and III which synthesize ribosomal RNA precursors, mRNA precursors and many functional non-coding RNAs, and small RNAs, such as 5S rRNA and tRNAs, respectively. Pol II is the central component of the basal RNA polymerase II transcription machinery. Pols are composed of mobile elements that move relative to each other. In Pol II, RPB6 is part of the clamp element and together with parts of RPB1 and RPB2 forms a pocket to which the RPB4-RPB7 subcomplex binds. In Caenorhabditis elegans, this protein is Probable DNA-directed RNA polymerases I, II, and III subunit RPABC2 (rpb-6).